The following is a 264-amino-acid chain: MSKISLTQVQKMKQSGEKIAMITAYDATFARLFDDEGVHSILVGDSLGMVVQGHNDTLPVTVNDMVYHTANVARGVQNALLIADLPFMSYSDVHSACINAGRLMAAGAKMVKIEGGDWLCDTVKQLNRNGIPVCAHLGLTPQSVHLFGGFRIQGRDAQRAEEIYHHALALQTAGVQMVVLECVPEQLAERITKALRIPVIGIGAGAQTDGQVLVMQDALGVTTGYIPKFSKNFLAETGDVRKAIQLYVEQVANGQFPAAEHTFN.

Residues Asp-45 and Asp-84 each contribute to the Mg(2+) site. 3-methyl-2-oxobutanoate contacts are provided by residues 45–46, Asp-84, and Lys-112; that span reads DS. Glu-114 provides a ligand contact to Mg(2+). Glu-181 (proton acceptor) is an active-site residue.

The protein belongs to the PanB family. As to quaternary structure, homodecamer; pentamer of dimers. Mg(2+) serves as cofactor.

Its subcellular location is the cytoplasm. It catalyses the reaction 3-methyl-2-oxobutanoate + (6R)-5,10-methylene-5,6,7,8-tetrahydrofolate + H2O = 2-dehydropantoate + (6S)-5,6,7,8-tetrahydrofolate. It functions in the pathway cofactor biosynthesis; (R)-pantothenate biosynthesis; (R)-pantoate from 3-methyl-2-oxobutanoate: step 1/2. Functionally, catalyzes the reversible reaction in which hydroxymethyl group from 5,10-methylenetetrahydrofolate is transferred onto alpha-ketoisovalerate to form ketopantoate. This chain is 3-methyl-2-oxobutanoate hydroxymethyltransferase, found in Tolumonas auensis (strain DSM 9187 / NBRC 110442 / TA 4).